The sequence spans 279 residues: NADPH-dependent 7-cyano-7-deazaguanine reductase (279 aa).

Residue isoleucine 86–serine 88 coordinates substrate. Serine 88–lysine 89 contacts NADPH. The active-site Thioimide intermediate is the cysteine 186. The active-site Proton donor is aspartate 193. Histidine 225–glutamate 226 contributes to the substrate binding site. Residue arginine 254–glycine 255 coordinates NADPH.

The protein belongs to the GTP cyclohydrolase I family. QueF type 2 subfamily. As to quaternary structure, homodimer.

The protein localises to the cytoplasm. It catalyses the reaction 7-aminomethyl-7-carbaguanine + 2 NADP(+) = 7-cyano-7-deazaguanine + 2 NADPH + 3 H(+). It functions in the pathway tRNA modification; tRNA-queuosine biosynthesis. Its function is as follows. Catalyzes the NADPH-dependent reduction of 7-cyano-7-deazaguanine (preQ0) to 7-aminomethyl-7-deazaguanine (preQ1). In Chromobacterium violaceum (strain ATCC 12472 / DSM 30191 / JCM 1249 / CCUG 213 / NBRC 12614 / NCIMB 9131 / NCTC 9757 / MK), this protein is NADPH-dependent 7-cyano-7-deazaguanine reductase.